The following is a 90-amino-acid chain: Acylphosphatase (90 aa).

The Acylphosphatase-like domain maps to Ala-3–Gly-90. Catalysis depends on residues Arg-18 and Asn-36.

Belongs to the acylphosphatase family.

The enzyme catalyses an acyl phosphate + H2O = a carboxylate + phosphate + H(+). The sequence is that of Acylphosphatase (acyP) from Leuconostoc mesenteroides subsp. mesenteroides (strain ATCC 8293 / DSM 20343 / BCRC 11652 / CCM 1803 / JCM 6124 / NCDO 523 / NBRC 100496 / NCIMB 8023 / NCTC 12954 / NRRL B-1118 / 37Y).